A 361-amino-acid polypeptide reads, in one-letter code: Phospho-N-acetylmuramoyl-pentapeptide-transferase (361 aa).

10 consecutive transmembrane segments (helical) span residues leucine 28 to leucine 48, threonine 74 to leucine 94, isoleucine 99 to alanine 119, serine 133 to aspartate 153, leucine 168 to serine 188, valine 203 to isoleucine 223, threonine 236 to phenylalanine 256, valine 263 to isoleucine 283, isoleucine 288 to valine 308, and lysine 338 to leucine 358.

The protein belongs to the glycosyltransferase 4 family. MraY subfamily. The cofactor is Mg(2+).

It is found in the cell inner membrane. The enzyme catalyses UDP-N-acetyl-alpha-D-muramoyl-L-alanyl-gamma-D-glutamyl-meso-2,6-diaminopimeloyl-D-alanyl-D-alanine + di-trans,octa-cis-undecaprenyl phosphate = di-trans,octa-cis-undecaprenyl diphospho-N-acetyl-alpha-D-muramoyl-L-alanyl-D-glutamyl-meso-2,6-diaminopimeloyl-D-alanyl-D-alanine + UMP. The protein operates within cell wall biogenesis; peptidoglycan biosynthesis. In terms of biological role, catalyzes the initial step of the lipid cycle reactions in the biosynthesis of the cell wall peptidoglycan: transfers peptidoglycan precursor phospho-MurNAc-pentapeptide from UDP-MurNAc-pentapeptide onto the lipid carrier undecaprenyl phosphate, yielding undecaprenyl-pyrophosphoryl-MurNAc-pentapeptide, known as lipid I. The polypeptide is Phospho-N-acetylmuramoyl-pentapeptide-transferase (Rickettsia felis (strain ATCC VR-1525 / URRWXCal2) (Rickettsia azadi)).